We begin with the raw amino-acid sequence, 172 residues long: Cystatin-like cysteine protease inhibitor EPIC4 (172 aa).

A signal peptide spans 1–17 (MRASLSILVAFPALAAA). Positions 71-75 (QVVAG) match the Secondary area of contact motif. The tract at residues 129–172 (EAATASSSSTPAPTPASTSTSASSSEETMLQSSVQQRAMFSDFV) is disordered. The span at 130-156 (AATASSSSTPAPTPASTSTSASSSEET) shows a compositional bias: low complexity. Residues 157–166 (MLQSSVQQRA) are compositionally biased toward polar residues.

The protein belongs to the cystatin family.

Its subcellular location is the secreted. Functionally, secreted effector that interacts with and inhibits host apoplastic pathogenesis-related papain-like cysteine proteases. Inhibition of host proteases by a pathogen extracellular protease inhibitor forms a specific type of defense-counterdefense mechanism between plants and microbial pathogens. The sequence is that of Cystatin-like cysteine protease inhibitor EPIC4 from Phytophthora infestans (Potato late blight agent).